The primary structure comprises 121 residues: UPF0102 protein DSY2577 (121 aa).

It belongs to the UPF0102 family.

The protein is UPF0102 protein DSY2577 of Desulfitobacterium hafniense (strain Y51).